The sequence spans 349 residues: Ornithine carbamoyltransferase, mitochondrial (349 aa).

Residues 73 to 76 (STRT), Arg124, His151, and Gln154 contribute to the carbamoyl phosphate site. Asn195, Asp261, Ser265, and Met266 together coordinate L-ornithine. Cys303 serves as the catalytic Proton acceptor. Residues 303 to 304 (CL) and Arg330 contribute to the carbamoyl phosphate site.

This sequence belongs to the aspartate/ornithine carbamoyltransferase superfamily. OTCase family. As to quaternary structure, homotrimer.

Its subcellular location is the mitochondrion matrix. The enzyme catalyses carbamoyl phosphate + L-ornithine = L-citrulline + phosphate + H(+). The protein operates within amino-acid biosynthesis; L-arginine biosynthesis; L-arginine from L-ornithine and carbamoyl phosphate: step 1/3. The polypeptide is Ornithine carbamoyltransferase, mitochondrial (Coccidioides immitis (strain RS) (Valley fever fungus)).